A 696-amino-acid chain; its full sequence is SEC14 domain and spectrin repeat-containing protein 1 (696 aa).

One can recognise a CRAL-TRIO domain in the interval 1–153 (MEASVILPIL…DFGGSLTYDH (153 aa)). Spectrin repeat units follow at residues 275-378 (EEIQ…NLLQ), 381-494 (LEFH…LKML), and 500-602 (FKCE…HRLE).

This sequence belongs to the SOLO family. As to quaternary structure, interacts (via the spectrin 1 repeat) with TRPC4 and TRPC5 (via CIRB domain). Interacts with CTNNB1. As to expression, broad expression. High expression in thalamus and brain. Significantly expressed in vasculature.

In terms of biological role, may act as the primary docking protein directing membrane turnover and assembly of the transient receptor potential channels TRPC4 and TRPC5. Binds phospholipids such as phosphatidylinositol monophosphates, phosphatidylinositol diphosphates (PIP2s) and phosphatidic acid, but not less polar lipids including phosphatidylcholine, phosphatidylserine, and phosphatidylinositol. The binding to PIP2s is calcium dependent. Might be involved in the plasma membrane localization of CTNNB1. In Homo sapiens (Human), this protein is SEC14 domain and spectrin repeat-containing protein 1 (SESTD1).